Here is a 78-residue protein sequence, read N- to C-terminus: Exodeoxyribonuclease 7 small subunit (78 aa).

The protein belongs to the XseB family. In terms of assembly, heterooligomer composed of large and small subunits.

Its subcellular location is the cytoplasm. It carries out the reaction Exonucleolytic cleavage in either 5'- to 3'- or 3'- to 5'-direction to yield nucleoside 5'-phosphates.. In terms of biological role, bidirectionally degrades single-stranded DNA into large acid-insoluble oligonucleotides, which are then degraded further into small acid-soluble oligonucleotides. The chain is Exodeoxyribonuclease 7 small subunit from Synechococcus sp. (strain JA-2-3B'a(2-13)) (Cyanobacteria bacterium Yellowstone B-Prime).